The primary structure comprises 122 residues: Large ribosomal subunit protein bL12 (122 aa).

This sequence belongs to the bacterial ribosomal protein bL12 family. Homodimer. Part of the ribosomal stalk of the 50S ribosomal subunit. Forms a multimeric L10(L12)X complex, where L10 forms an elongated spine to which 2 to 4 L12 dimers bind in a sequential fashion. Binds GTP-bound translation factors.

Forms part of the ribosomal stalk which helps the ribosome interact with GTP-bound translation factors. Is thus essential for accurate translation. The protein is Large ribosomal subunit protein bL12 of Clostridium botulinum (strain 657 / Type Ba4).